The following is a 325-amino-acid chain: Eukaryotic translation initiation factor 3 subunit I (325 aa).

WD repeat units follow at residues 8 to 47 (GHER…RLGT), 50 to 89 (GHTG…QLAL), 144 to 183 (CSDS…QLSN), 186 to 225 (EHTK…HLKT), and 283 to 324 (GHFG…FEFE).

It belongs to the eIF-3 subunit I family. As to quaternary structure, component of the eukaryotic translation initiation factor 3 (eIF-3) complex, which is composed of 13 subunits: EIF3A, EIF3B, EIF3C, EIF3D, EIF3E, EIF3F, EIF3G, EIF3H, EIF3I, EIF3J, EIF3K, EIF3L and EIF3M.

It is found in the cytoplasm. In terms of biological role, component of the eukaryotic translation initiation factor 3 (eIF-3) complex, which is involved in protein synthesis of a specialized repertoire of mRNAs and, together with other initiation factors, stimulates binding of mRNA and methionyl-tRNAi to the 40S ribosome. The eIF-3 complex specifically targets and initiates translation of a subset of mRNAs involved in cell proliferation. The chain is Eukaryotic translation initiation factor 3 subunit I from Taeniopygia guttata (Zebra finch).